Reading from the N-terminus, the 110-residue chain is Phosphoribosyl-ATP pyrophosphatase (110 aa).

It belongs to the PRA-PH family.

Its subcellular location is the cytoplasm. It catalyses the reaction 1-(5-phospho-beta-D-ribosyl)-ATP + H2O = 1-(5-phospho-beta-D-ribosyl)-5'-AMP + diphosphate + H(+). The protein operates within amino-acid biosynthesis; L-histidine biosynthesis; L-histidine from 5-phospho-alpha-D-ribose 1-diphosphate: step 2/9. The polypeptide is Phosphoribosyl-ATP pyrophosphatase (Lacticaseibacillus casei (strain BL23) (Lactobacillus casei)).